Consider the following 189-residue polypeptide: dCTP deaminase, dUMP-forming (189 aa).

DCTP is bound by residues 101–106 (KSSLGR), aspartate 119, 127–129 (TLE), glutamine 148, tyrosine 162, lysine 170, and glutamine 174. Glutamate 129 functions as the Proton donor/acceptor in the catalytic mechanism. The tract at residues 163-189 (GSGKLGSKYQGQRGPTPSKAYLNFPNK) is disordered.

The protein belongs to the dCTP deaminase family. As to quaternary structure, homotrimer.

It carries out the reaction dCTP + 2 H2O = dUMP + NH4(+) + diphosphate. The protein operates within pyrimidine metabolism; dUMP biosynthesis; dUMP from dCTP: step 1/1. Functionally, bifunctional enzyme that catalyzes both the deamination of dCTP to dUTP and the hydrolysis of dUTP to dUMP without releasing the toxic dUTP intermediate. This is dCTP deaminase, dUMP-forming from Corynebacterium glutamicum (strain R).